Here is a 281-residue protein sequence, read N- to C-terminus: 2-dehydro-3-deoxyphosphooctonate aldolase (281 aa).

Belongs to the KdsA family.

It localises to the cytoplasm. The enzyme catalyses D-arabinose 5-phosphate + phosphoenolpyruvate + H2O = 3-deoxy-alpha-D-manno-2-octulosonate-8-phosphate + phosphate. It participates in carbohydrate biosynthesis; 3-deoxy-D-manno-octulosonate biosynthesis; 3-deoxy-D-manno-octulosonate from D-ribulose 5-phosphate: step 2/3. The protein operates within bacterial outer membrane biogenesis; lipopolysaccharide biosynthesis. The protein is 2-dehydro-3-deoxyphosphooctonate aldolase of Pseudomonas aeruginosa (strain UCBPP-PA14).